A 179-amino-acid chain; its full sequence is UPF0227 protein VP0969 (179 aa).

This sequence belongs to the UPF0227 family.

This Vibrio parahaemolyticus serotype O3:K6 (strain RIMD 2210633) protein is UPF0227 protein VP0969.